Reading from the N-terminus, the 274-residue chain is Bis(5'-nucleosyl)-tetraphosphatase, symmetrical (274 aa).

It belongs to the Ap4A hydrolase family.

The catalysed reaction is P(1),P(4)-bis(5'-adenosyl) tetraphosphate + H2O = 2 ADP + 2 H(+). Hydrolyzes diadenosine 5',5'''-P1,P4-tetraphosphate to yield ADP. In Shewanella baltica (strain OS185), this protein is Bis(5'-nucleosyl)-tetraphosphatase, symmetrical.